The primary structure comprises 189 residues: dCTP deaminase, dUMP-forming (189 aa).

DCTP is bound by residues 101–106 (KSSLGR), D119, 127–129 (TLE), Q148, Y162, and Q174. Residue E129 is the Proton donor/acceptor of the active site.

Belongs to the dCTP deaminase family. Homotrimer.

The enzyme catalyses dCTP + 2 H2O = dUMP + NH4(+) + diphosphate. Its pathway is pyrimidine metabolism; dUMP biosynthesis; dUMP from dCTP: step 1/1. Bifunctional enzyme that catalyzes both the deamination of dCTP to dUTP and the hydrolysis of dUTP to dUMP without releasing the toxic dUTP intermediate. The polypeptide is dCTP deaminase, dUMP-forming (Rhodococcus opacus (strain B4)).